Here is a 422-residue protein sequence, read N- to C-terminus: Putative FBD-associated F-box protein At1g55030 (422 aa).

One can recognise an F-box domain in the interval T8–L60. 3 LRR repeats span residues T132 to K153, S154 to L175, and N180 to V201. Residues E342 to L391 form the FBD domain.

This is Putative FBD-associated F-box protein At1g55030 from Arabidopsis thaliana (Mouse-ear cress).